A 293-amino-acid chain; its full sequence is Small ribosomal subunit biogenesis GTPase RsgA (293 aa).

The CP-type G domain maps to 63-223 (KNQLNRPPIA…VADTPGFSSL (161 aa)). Residues 112–115 (SKTD) and 166–174 (GQSGVGKSS) each bind GTP. Cys247, Cys252, His254, and Cys260 together coordinate Zn(2+).

Belongs to the TRAFAC class YlqF/YawG GTPase family. RsgA subfamily. As to quaternary structure, monomer. Associates with 30S ribosomal subunit, binds 16S rRNA. Requires Zn(2+) as cofactor.

It localises to the cytoplasm. One of several proteins that assist in the late maturation steps of the functional core of the 30S ribosomal subunit. Helps release RbfA from mature subunits. May play a role in the assembly of ribosomal proteins into the subunit. Circularly permuted GTPase that catalyzes slow GTP hydrolysis, GTPase activity is stimulated by the 30S ribosomal subunit. This chain is Small ribosomal subunit biogenesis GTPase RsgA, found in Shouchella clausii (strain KSM-K16) (Alkalihalobacillus clausii).